Here is a 387-residue protein sequence, read N- to C-terminus: MKFIQLYGDRGLTIVKGEGQYVWDISGTKYLDLHTGIGVAFLGHRNRRVIEYLSRQMENIMTLSTSFSTPIRDEMLKELDPLKPDKMDNIILLNSGTEAVEAALKTARKITGRKKIIAFKNSFHGRTAGSLSVTWNKRYREPFEPLMSPVQFLTYNNIDELKNIDEQTAAVIVEPIQGESGVIPANEDFMKALREQTQKVGALLVVDEVQTGFGRTGKVWAYQHYGIIPDLLTAGKAIGGGFPVSALFLPDWIAEKLEEGDHGSTYGGNPMAMAAVTAASKVLKEDNVVEQASIKGEIFKKILREKLSDLKSVREIRGKGLMIGIEIRFPPAIALKVMQDERVLALKAGSTVIRFLAPYMITQSDMEEASNAARKGIIETENKRAIT.

Pyridoxal 5'-phosphate-binding positions include 96–97 (GT) and phenylalanine 123. Residue arginine 126 participates in substrate binding. 207–210 (DEVQ) provides a ligand contact to pyridoxal 5'-phosphate. The residue at position 236 (lysine 236) is an N6-(pyridoxal phosphate)lysine. Serine 264 provides a ligand contact to substrate. Pyridoxal 5'-phosphate is bound at residue threonine 265.

Belongs to the class-III pyridoxal-phosphate-dependent aminotransferase family. LysJ subfamily. As to quaternary structure, homodimer. The cofactor is pyridoxal 5'-phosphate.

The protein resides in the cytoplasm. The enzyme catalyses [amino-group carrier protein]-C-terminal-gamma-(L-lysyl)-L-glutamate + 2-oxoglutarate = [amino-group carrier protein]-C-terminal-N-(1-carboxy-5-oxopentan-1-yl)-L-glutamine + L-glutamate. It catalyses the reaction [amino-group carrier protein]-C-terminal-gamma-(L-ornithyl)-L-glutamate + 2-oxoglutarate = [amino-group carrier protein]-C-terminal-gamma-(L-glutamyl-5-semialdehyde)-L-glutamate + L-glutamate. It participates in amino-acid biosynthesis; L-lysine biosynthesis via AAA pathway; L-lysine from L-alpha-aminoadipate (Thermus route): step 4/5. It functions in the pathway amino-acid biosynthesis; L-arginine biosynthesis. Functionally, involved in both the arginine and lysine biosynthetic pathways. The sequence is that of [LysW]-aminoadipate semialdehyde/glutamate semialdehyde transaminase from Sulfurisphaera tokodaii (strain DSM 16993 / JCM 10545 / NBRC 100140 / 7) (Sulfolobus tokodaii).